The following is a 421-amino-acid chain: Synaptotagmin-15 (421 aa).

Residues 1-4 (MAEQ) are Extracellular-facing. Residues 5-29 (LALVIGGTIGGLLLLLLIGASCCLW) form a helical; Signal-anchor for type III membrane protein membrane-spanning segment. Residues 30 to 421 (RRFCATLTYE…WHALCRTTEP (392 aa)) are Cytoplasmic-facing. A disordered region spans residues 47-68 (MATTAASSGQRDRPCQPHARTQ). C2 domains are found at residues 147 to 264 (CLGR…RRVI) and 278 to 399 (EFGD…EHWD).

The protein belongs to the synaptotagmin family. As to quaternary structure, homodimer.

Its subcellular location is the cell membrane. In terms of biological role, may be involved in the trafficking and exocytosis of secretory vesicles in non-neuronal tissues. The protein is Synaptotagmin-15 (SYT15) of Homo sapiens (Human).